A 609-amino-acid polypeptide reads, in one-letter code: Alpha-fetoprotein (609 aa).

Positions 1–18 (MKWVESIFLIFLLNFTES) are cleaved as a signal peptide. 3 Albumin domains span residues 19–210 (RTLH…ATVT), 211–402 (KELR…EELQ), and 403–601 (KYIQ…KLIS). A Cu(2+)-binding site is contributed by His-22. N-linked (GlcNAc...) asparagine glycosylation occurs at Asn-42. 8 disulfides stabilise this stretch: Cys-99–Cys-114, Cys-113–Cys-124, Cys-148–Cys-193, Cys-192–Cys-201, Cys-224–Cys-270, Cys-269–Cys-277, Cys-289–Cys-303, and Cys-302–Cys-313. A phosphoserine mark is found at Ser-111, Ser-115, and Ser-117. An N-linked (GlcNAc...) asparagine glycan is attached at Asn-251. Ser-344 is subject to Phosphoserine. Intrachain disulfides connect Cys-384/Cys-393, Cys-416/Cys-462, Cys-461/Cys-472, Cys-485/Cys-501, Cys-500/Cys-511, Cys-538/Cys-583, and Cys-582/Cys-591. Ser-444 is subject to Phosphoserine.

Belongs to the ALB/AFP/VDB family. As to quaternary structure, dimeric and trimeric forms have been found in addition to the monomeric form. Plasma. Synthesized by the fetal liver and yolk sac.

Its subcellular location is the secreted. Binds copper, nickel, and fatty acids as well as, and bilirubin less well than, serum albumin. In Pan troglodytes (Chimpanzee), this protein is Alpha-fetoprotein (AFP).